The following is a 508-amino-acid chain: Probable G-protein coupled receptor 101 (508 aa).

At 1–35 (MTSTCTNSTRESNSSHTCMPLSKMPISLAHGIIRS) the chain is on the extracellular side. Asparagine 7 and asparagine 13 each carry an N-linked (GlcNAc...) asparagine glycan. Residues 36–56 (TVLVIFLAASFVGNIVLALVL) form a helical membrane-spanning segment. Residues 57 to 68 (QRKPQLLQVTNR) lie on the Cytoplasmic side of the membrane. The chain crosses the membrane as a helical span at residues 69–89 (FIFNLLVTDLLQISLVAPWVV). At 90–106 (ATSVPLFWPLNSHFCTA) the chain is on the extracellular side. A disulfide bond links cysteine 104 and cysteine 182. The chain crosses the membrane as a helical span at residues 107–127 (LVSLTHLFAFASVNTIVVVSV). Residues 128–149 (DRYLSIIHPLSYPSKMTQRRGY) are Cytoplasmic-facing. A helical transmembrane segment spans residues 150-170 (LLLYGTWIVAILQSTPPLYGW). Over 171 to 196 (GQAAFDERNALCSMIWGASPSYTILS) the chain is Extracellular. The helical transmembrane segment at 197-217 (VVSFIVIPLIVMIACYSVVFC) threads the bilayer. Over 218–399 (AARRQHALLY…PRCYQCKAAK (182 aa)) the chain is Cytoplasmic. Residues 244–338 (NEDEEGAEKK…ENSMKADKGR (95 aa)) are disordered. Basic and acidic residues-rich tracts occupy residues 250–288 (AEKKEEFQDESEFRRQHEGEVKAKEGRMEAKDGSLKAKE) and 318–338 (MEGKEGSTKVEENSMKADKGR). The helical transmembrane segment at 400–420 (VIFIIIFSYVLSLGPYCFLAV) threads the bilayer. At 421–433 (LAVWVDVETQVPQ) the chain is on the extracellular side. A helical transmembrane segment spans residues 434-454 (WVITIIIWLFFLQCCIHPYVY). At 455 to 508 (GYMHKTIKKEIQDMLKKFFCKEKPPKEDSHPDLPGTEGGTEGKIVPSYDSATFP) the chain is on the cytoplasmic side. A compositionally biased stretch (basic and acidic residues) spans 476–485 (EKPPKEDSHP). Positions 476–508 (EKPPKEDSHPDLPGTEGGTEGKIVPSYDSATFP) are disordered.

Belongs to the G-protein coupled receptor 1 family.

It is found in the cell membrane. Its function is as follows. Orphan receptor. This is Probable G-protein coupled receptor 101 (GPR101) from Homo sapiens (Human).